We begin with the raw amino-acid sequence, 132 residues long: S-protein homolog 8 (132 aa).

A signal peptide spans 1–20 (MHSLSWFLLVIGLSVGLSSG).

It belongs to the plant self-incompatibility (S1) protein family. As to expression, mostly expressed in seedlings, stems, leaves and floral tissues, and, to a lower extent, in roots.

It localises to the secreted. The chain is S-protein homolog 8 from Arabidopsis thaliana (Mouse-ear cress).